A 640-amino-acid chain; its full sequence is Preterminal protein (640 aa).

The disordered stretch occupies residues 232–257 (PSQEGEGEERENPDRASSRPRPQETV). The Nuclear localization signal signature appears at 351-360 (RLPVRRRRRR). An O-(5'-phospho-DNA)-serine modification is found at S549. Residues 614–640 (GADVPLPAMPPGPEPPLPPGARPRHRF) form a disordered region. The segment covering 620–634 (PAMPPGPEPPLPPGA) has biased composition (pro residues).

Belongs to the adenoviridae terminal protein family. Heterodimer with the polymerase; this heterodimer binds to bp 9 to 18 of the genome. Interacts with host POU2F1; POU2F1 binds to the auxiliary sequences in the inverted terminal repeats and tethers the pTP-POL heterodimer to the origin DNA thereby participating in the assembly of the pre-initiation complex (POL-TP-DBP-NFIA-POU2F1). Post-translationally, preterminal protein is used to replicate viral genome, upon genomic encapsidation it is processed first into iTP and finally into TP by adenovirus protease.

It is found in the host nucleus matrix. In terms of biological role, protein covalently bound to the viral DNA that acts as a primer for viral genomic replication by DNA strand displacement. Assembles on the viral origin of replication in an initiation complex with viral polymerase, DBP, host NFIA and host POU2F1/OCT1. During initiation, the polymerase covalently couples the first dCTP with Ser-580 of pTP. The terminal protein stimulates the template activity over 20 fold compared to protein-free templates. Neo-synthesized viral genomes are linked to two preterminal proteins, one for each 5' end. These new genomes are encapsidated in the nucleus, and during capsid maturation by viral protease, preterminal protein is first cleaved into intermediary (iTP), then into mature TP. May play a role in host nuclear matrix localization of genomic DNA. This chain is Preterminal protein, found in Human adenovirus B serotype 7 (HAdV-7).